The primary structure comprises 465 residues: Pleckstrin homology domain-containing family S member 1 (465 aa).

The PH domain occupies 14-129; the sequence is EVCKQDYFIK…WVSFMSSFRQ (116 aa). A compositionally biased stretch (polar residues) spans 159-173; it reads PSSTSEAVGSSSPRN. Disordered stretches follow at residues 159-179 and 258-283; these read PSST…QDKH and ETSH…GDLH. The span at 258–271 shows a compositional bias: basic and acidic residues; the sequence is ETSHESVDSSKEEP.

This chain is Pleckstrin homology domain-containing family S member 1, found in Homo sapiens (Human).